A 29-amino-acid polypeptide reads, in one-letter code: Cuticle protein 36 (29 aa).

Functionally, component of the cuticle of migratory locust which contains more than 100 different structural proteins. This Locusta migratoria (Migratory locust) protein is Cuticle protein 36.